The sequence spans 377 residues: Chaperone protein DnaJ (377 aa).

Residues 5–69 (DYYEVLGISK…QKRAQYDQYG (65 aa)) enclose the J domain. A CR-type zinc finger spans residues 134–216 (GKDAEIEIPR…CHGKGRVTKT (83 aa)). Residues Cys147, Cys150, Cys164, Cys167, Cys190, Cys193, Cys204, and Cys207 each contribute to the Zn(2+) site. CXXCXGXG motif repeat units follow at residues 147 to 154 (CDTCHGSG), 164 to 171 (CSHCGGKG), 190 to 197 (CQYCNGTG), and 204 to 211 (CPTCHGKG).

It belongs to the DnaJ family. As to quaternary structure, homodimer. Zn(2+) is required as a cofactor.

Its subcellular location is the cytoplasm. Functionally, participates actively in the response to hyperosmotic and heat shock by preventing the aggregation of stress-denatured proteins and by disaggregating proteins, also in an autonomous, DnaK-independent fashion. Unfolded proteins bind initially to DnaJ; upon interaction with the DnaJ-bound protein, DnaK hydrolyzes its bound ATP, resulting in the formation of a stable complex. GrpE releases ADP from DnaK; ATP binding to DnaK triggers the release of the substrate protein, thus completing the reaction cycle. Several rounds of ATP-dependent interactions between DnaJ, DnaK and GrpE are required for fully efficient folding. Also involved, together with DnaK and GrpE, in the DNA replication of plasmids through activation of initiation proteins. This is Chaperone protein DnaJ from Listeria monocytogenes serotype 1/2a (strain 10403S).